A 488-amino-acid chain; its full sequence is MTFNHKTIEELHDLLVKKEISAVELTQATLADIKEREAAVDSFITVSEEEALAQAAALDAKGIDADNLMSGIPLAVKDNISTKGILTTAASKILYNYKPIFDATSVEKLYGKDMIIVGKTNMDEFAMGGSSENSYFKTTKNAWDSSKVPGGSSGGSATAVASGQVRLSLGSDTGGSIRQPASFNGVVGLKPTYGRVSRFGLIAFGSSLDQIGPFSQTVKENAQLLNVISGNDPKDSTSSQEEVPDFTSKIGQDIKGMKIALPKEYMGEGIDSKVKETILAAAKHLESLGAIVEEVSLPHSKYGVAVYYIIASSEASSNLQRFDGIRYGYRAEGIENLEDVYVKSRSEGFGEEVKRRIMLGTFSLSSGYYDAYFKKAGQVRTLIMQDFAKVFEKYDLILGPTAPTVAYDLGSQNQDPVAMYLADLLTIPVNLAGLPGISIPAGFVDGLPVGLQLIGNHFDEATIYQTAAAFEATTDYHKQQPVIFGGEK.

Catalysis depends on charge relay system residues lysine 77 and serine 152. Serine 176 (acyl-ester intermediate) is an active-site residue.

Belongs to the amidase family. GatA subfamily. As to quaternary structure, heterotrimer of A, B and C subunits.

It catalyses the reaction L-glutamyl-tRNA(Gln) + L-glutamine + ATP + H2O = L-glutaminyl-tRNA(Gln) + L-glutamate + ADP + phosphate + H(+). Allows the formation of correctly charged Gln-tRNA(Gln) through the transamidation of misacylated Glu-tRNA(Gln) in organisms which lack glutaminyl-tRNA synthetase. The reaction takes place in the presence of glutamine and ATP through an activated gamma-phospho-Glu-tRNA(Gln). The polypeptide is Glutamyl-tRNA(Gln) amidotransferase subunit A (Streptococcus sanguinis (strain SK36)).